The chain runs to 343 residues: Holliday junction branch migration complex subunit RuvB (343 aa).

The segment at 1–186 (MTEEFDIRQE…FGINLHLEYY (186 aa)) is large ATPase domain (RuvB-L). ATP-binding positions include Leu25, Arg26, Gly67, Lys70, Thr71, Thr72, 133-135 (EDY), Arg176, Tyr186, and Arg223. Thr71 serves as a coordination point for Mg(2+). A small ATPAse domain (RuvB-S) region spans residues 187 to 257 (DVHTITGIVE…IACYALEALN (71 aa)). A head domain (RuvB-H) region spans residues 260–343 (RYGLDNVDHK…PRPHRPSLFD (84 aa)). Positions 315 and 320 each coordinate DNA.

Belongs to the RuvB family. Homohexamer. Forms an RuvA(8)-RuvB(12)-Holliday junction (HJ) complex. HJ DNA is sandwiched between 2 RuvA tetramers; dsDNA enters through RuvA and exits via RuvB. An RuvB hexamer assembles on each DNA strand where it exits the tetramer. Each RuvB hexamer is contacted by two RuvA subunits (via domain III) on 2 adjacent RuvB subunits; this complex drives branch migration. In the full resolvosome a probable DNA-RuvA(4)-RuvB(12)-RuvC(2) complex forms which resolves the HJ.

It localises to the cytoplasm. It catalyses the reaction ATP + H2O = ADP + phosphate + H(+). Its function is as follows. The RuvA-RuvB-RuvC complex processes Holliday junction (HJ) DNA during genetic recombination and DNA repair, while the RuvA-RuvB complex plays an important role in the rescue of blocked DNA replication forks via replication fork reversal (RFR). RuvA specifically binds to HJ cruciform DNA, conferring on it an open structure. The RuvB hexamer acts as an ATP-dependent pump, pulling dsDNA into and through the RuvAB complex. RuvB forms 2 homohexamers on either side of HJ DNA bound by 1 or 2 RuvA tetramers; 4 subunits per hexamer contact DNA at a time. Coordinated motions by a converter formed by DNA-disengaged RuvB subunits stimulates ATP hydrolysis and nucleotide exchange. Immobilization of the converter enables RuvB to convert the ATP-contained energy into a lever motion, pulling 2 nucleotides of DNA out of the RuvA tetramer per ATP hydrolyzed, thus driving DNA branch migration. The RuvB motors rotate together with the DNA substrate, which together with the progressing nucleotide cycle form the mechanistic basis for DNA recombination by continuous HJ branch migration. Branch migration allows RuvC to scan DNA until it finds its consensus sequence, where it cleaves and resolves cruciform DNA. The chain is Holliday junction branch migration complex subunit RuvB from Porphyromonas gingivalis (strain ATCC BAA-308 / W83).